Reading from the N-terminus, the 328-residue chain is Malate dehydrogenase (328 aa).

12–18 (GAAGQIG) contacts NAD(+). Substrate contacts are provided by R95 and R101. NAD(+) contacts are provided by residues N108, Q115, and 132-134 (VGN). Substrate contacts are provided by N134 and R165. H190 (proton acceptor) is an active-site residue.

Belongs to the LDH/MDH superfamily. MDH type 2 family.

It catalyses the reaction (S)-malate + NAD(+) = oxaloacetate + NADH + H(+). Its function is as follows. Catalyzes the reversible oxidation of malate to oxaloacetate. The polypeptide is Malate dehydrogenase (Delftia acidovorans (strain DSM 14801 / SPH-1)).